A 239-amino-acid polypeptide reads, in one-letter code: MSKAQTLSAADRAKLEALIGHDFAEKERLDRALTHASARTEKGSNYERLEFLGDRVLGLCIAELLFRTFGTAGEGELSVRLNQLVSAETCAAVADELNLHLYIRTGADVKKLTGKRMMNVRADVVESLIAAIYLDGGLEVARRFILRYWQGRAVRADGAKRDAKTELQEWSHAKFGVTPIYRVDERSGPDHDPRFRVTVEVAGIKPESGVERSKRAAEQVAATKMLEREGIWQQSPAGN.

One can recognise an RNase III domain in the interval 12 to 137 (RAKLEALIGH…LIAAIYLDGG (126 aa)). A Mg(2+)-binding site is contributed by Glu-50. Residue Asp-54 is part of the active site. Mg(2+)-binding residues include Asp-123 and Glu-126. Glu-126 is a catalytic residue. Residues 162–231 (DAKTELQEWS…ATKMLEREGI (70 aa)) form the DRBM domain.

Belongs to the ribonuclease III family. As to quaternary structure, homodimer. It depends on Mg(2+) as a cofactor.

It is found in the cytoplasm. It catalyses the reaction Endonucleolytic cleavage to 5'-phosphomonoester.. In terms of biological role, digests double-stranded RNA. Involved in the processing of primary rRNA transcript to yield the immediate precursors to the large and small rRNAs (23S and 16S). Processes some mRNAs, and tRNAs when they are encoded in the rRNA operon. Processes pre-crRNA and tracrRNA of type II CRISPR loci if present in the organism. The protein is Ribonuclease 3 of Rhizobium etli (strain ATCC 51251 / DSM 11541 / JCM 21823 / NBRC 15573 / CFN 42).